A 332-amino-acid chain; its full sequence is DNA-directed RNA polymerase subunit alpha (332 aa).

Positions 1–231 are alpha N-terminal domain (alpha-NTD); the sequence is MQTNLLKPKT…EQLAVFAQLD (231 aa). The segment at 252 to 332 is alpha C-terminal domain (alpha-CTD); that stretch reads FDPILLRPVD…NWPPAGLEKR (81 aa).

It belongs to the RNA polymerase alpha chain family. As to quaternary structure, homodimer. The RNAP catalytic core consists of 2 alpha, 1 beta, 1 beta' and 1 omega subunit. When a sigma factor is associated with the core the holoenzyme is formed, which can initiate transcription.

The catalysed reaction is RNA(n) + a ribonucleoside 5'-triphosphate = RNA(n+1) + diphosphate. Functionally, DNA-dependent RNA polymerase catalyzes the transcription of DNA into RNA using the four ribonucleoside triphosphates as substrates. The polypeptide is DNA-directed RNA polymerase subunit alpha (Delftia acidovorans (strain DSM 14801 / SPH-1)).